We begin with the raw amino-acid sequence, 140 residues long: Pre-mRNA-splicing factor NTC20 (140 aa).

Ser139 is subject to Phosphoserine.

In terms of assembly, belongs to the NTC complex (or PRP19-associated complex), composed of at least CEF1, CLF1, ISY1, NTC20, SNT309, SYF1, SYF2, and PRP19. The NTC complex associates with the spliceosome after the release of the U1 and U4 snRNAs and forms the CWC spliceosome subcomplex (or CEF1-associated complex) reminiscent of a late-stage spliceosome composed also of the U2, U5 and U6 snRNAs and at least BUD13, BRR2, CDC40, CUS1, CWC2, CWC15, CWC21, CWC22, CWC23, CWC24, CWC25, CWC27, ECM2, HSH155, IST3, LEA1, MSL1, PRP8, PRP9, PRP11, PRP21, PRP22, PRP45, PRP46, SLU7, SMB1, SMD1, SMD2, SMD3, SMX2, SMX3, SNU114, SPP2, RSE1 and YJU2. Interacts with CEF1, CLF1, ISY1, PRP46, and SYF1.

It is found in the nucleus. Functionally, involved in pre-mRNA splicing. As a component of the NTC complex, associates to the spliceosome to mediate conformational rearrangement or to stabilize the structure of the spliceosome after U4 snRNA dissociation, which leads to spliceosome maturation. This Saccharomyces cerevisiae (strain ATCC 204508 / S288c) (Baker's yeast) protein is Pre-mRNA-splicing factor NTC20 (NTC20).